The sequence spans 141 residues: Extracellular globin-1 (141 aa).

Residues D1–P141 enclose the Globin domain. The cysteines at positions 2 and 131 are disulfide-linked. H94 contacts heme b.

The protein belongs to the globin family. The giant hemoglobins of worms are formed of a monomeric subunit and a disulfide-bonded trimer. This subunit is monomeric.

It is found in the secreted. This is Extracellular globin-1 from Metaphire sieboldi (Earthworm).